The primary structure comprises 496 residues: Lysosomal Pro-X carboxypeptidase (496 aa).

The signal sequence occupies residues M1 to A21. A propeptide spanning residues L22–A45 is cleaved from the precursor. N-linked (GlcNAc...) asparagine glycans are attached at residues N47 and N101. The active-site Charge relay system is S179. The interval H194–Y334 is SKS domain. 4 cysteine pairs are disulfide-bonded: C215/C372, C233/C310, C264/C343, and C364/C394. N-linked (GlcNAc...) asparagine glycosylation is found at N317, N336, and N345. N-linked (GlcNAc...) asparagine glycosylation is present at N415. Residues D430 and H455 each act as charge relay system in the active site.

It belongs to the peptidase S28 family. As to quaternary structure, homodimer.

The protein resides in the lysosome. It carries out the reaction Cleavage of a -Pro-|-Xaa bond to release a C-terminal amino acid.. Functionally, cleaves C-terminal amino acids linked to proline in peptides such as angiotensin II, III and des-Arg9-bradykinin. This cleavage occurs at acidic pH, but enzymatic activity is retained with some substrates at neutral pH. This chain is Lysosomal Pro-X carboxypeptidase (PRCP), found in Pongo abelii (Sumatran orangutan).